The following is a 280-amino-acid chain: Acyl-[acyl-carrier-protein]--UDP-N-acetylglucosamine O-acyltransferase (280 aa).

The protein belongs to the transferase hexapeptide repeat family. LpxA subfamily. As to quaternary structure, homotrimer.

The protein resides in the cytoplasm. The enzyme catalyses a (3R)-hydroxyacyl-[ACP] + UDP-N-acetyl-alpha-D-glucosamine = a UDP-3-O-[(3R)-3-hydroxyacyl]-N-acetyl-alpha-D-glucosamine + holo-[ACP]. It functions in the pathway glycolipid biosynthesis; lipid IV(A) biosynthesis; lipid IV(A) from (3R)-3-hydroxytetradecanoyl-[acyl-carrier-protein] and UDP-N-acetyl-alpha-D-glucosamine: step 1/6. Involved in the biosynthesis of lipid A, a phosphorylated glycolipid that anchors the lipopolysaccharide to the outer membrane of the cell. This chain is Acyl-[acyl-carrier-protein]--UDP-N-acetylglucosamine O-acyltransferase, found in Chlamydia trachomatis serovar L2 (strain ATCC VR-902B / DSM 19102 / 434/Bu).